A 240-amino-acid chain; its full sequence is Large ribosomal subunit protein uL1c (240 aa).

This sequence belongs to the universal ribosomal protein uL1 family. Part of the 50S ribosomal subunit.

It is found in the plastid. The protein localises to the chloroplast. Its function is as follows. Binds directly to 23S rRNA. Might be involved in E site tRNA release (Potential). This Cyanidium caldarium (Red alga) protein is Large ribosomal subunit protein uL1c (rpl1).